We begin with the raw amino-acid sequence, 710 residues long: MLLIALNTDLRTTGKKFLPNDINGGKVEKVNGPCVLQIQKIRNISAPKDNEESQAAPRMLRLQLTDGHTSCTAIELNYLSKISLNTPPGTKIKLLGTIEVKNGYLLLDDTNTVVLGGEVEHLIEKWELQRSLSKHSRSNIGIEGGPPPFVPFGQRCASVASVDSKELDSRKTLQASSVTKPVGENDEFEKQRTAAIAEVAKSKETKTFGGGGNAGSNLNPGAGGSRNKEVFQKEKIIRAEGKSEGVYRELVDEKALRHITEMGFSKDAARQALMDHSNNVEAALNSLLTGNKSKPVQGPPARGKGKGRGRTRAEEDDELTSARPSAPSTLFDFLESKMGSFSIEDHKLQSQSQSQVHQKPLNLEQNGIKDYNHKDYNQPRQFTRNDTRAPRNEKPPRFQKEIQASRQYEGNGPPKSRGSEKQSSSVAEQWMEERNKCERGYPRNDRLKDFSHLPSSHQNEGSYKKSYTNPMQGRGMKGGNHTEVKEEFHHQNSNTEGSHQKRGKKDDQRYNSEFYTDRRARTGNTETFTNIPNEKCFSANNELSNFQTILIKDGANDLSNGEVDQKARRFGPIKPIGTNLNSSHEDKSKMFSYNNAKKRSGPIKQERPLEAVYSGFSWRPGDECLALYWEDNKYYRAEVEALHSSGTTAVVKFSDYGNYEEVLLENIRPIQAEAWEEEGDFGDFRRGGDGQPRRSTRPTQQFYQPPRARN.

3 disordered regions span residues 206–227 (KTFG…GSRN), 288–328 (LTGN…SAPS), and 369–515 (KDYN…SEFY). In terms of domain architecture, UBA spans 250-290 (LVDEKALRHITEMGFSKDAARQALMDHSNNVEAALNSLLTG). Composition is skewed to basic and acidic residues over residues 370–400 (DYNH…RFQK) and 431–451 (MEER…KDFS). Positions 453-471 (LPSSHQNEGSYKKSYTNPM) are enriched in polar residues. Basic and acidic residues-rich tracts occupy residues 480–490 (NHTEVKEEFHH) and 504–515 (KKDDQRYNSEFY). The Tudor domain maps to 617 to 677 (SWRPGDECLA…RPIQAEAWEE (61 aa)). Positions 678–710 (EGDFGDFRRGGDGQPRRSTRPTQQFYQPPRARN) are disordered. The segment covering 682–692 (GDFRRGGDGQP) has biased composition (basic and acidic residues).

Component of mRNA stress granules.

The protein localises to the cytoplasm. The protein resides in the nucleus. Its function is as follows. Scaffolding protein that specifically recognizes and binds dimethylarginine-containing proteins. Plays a role in the regulation of translation of target mRNAs by binding Arg/Gly-rich motifs (GAR) in dimethylarginine-containing proteins. In nucleus, acts as a coactivator: recognizes and binds asymmetric dimethylation on the core histone tails associated with transcriptional activation (H3R17me2a and H4R3me2a) and recruits proteins at these arginine-methylated loci. In cytoplasm, acts as an antiviral factor that participates in the assembly of stress granules together with G3BP1. The protein is Tudor domain-containing protein 3 (tdrd3) of Xenopus tropicalis (Western clawed frog).